We begin with the raw amino-acid sequence, 234 residues long: Orotidine 5'-phosphate decarboxylase (234 aa).

Residues D10, K32, 59–68, T122, R184, Q193, G213, and R214 contribute to the substrate site; that span reads DLKLHDIPTT. K61 serves as the catalytic Proton donor.

This sequence belongs to the OMP decarboxylase family. Type 1 subfamily. In terms of assembly, homodimer.

The enzyme catalyses orotidine 5'-phosphate + H(+) = UMP + CO2. It participates in pyrimidine metabolism; UMP biosynthesis via de novo pathway; UMP from orotate: step 2/2. Its function is as follows. Catalyzes the decarboxylation of orotidine 5'-monophosphate (OMP) to uridine 5'-monophosphate (UMP). The sequence is that of Orotidine 5'-phosphate decarboxylase from Bacillus pumilus (strain SAFR-032).